Reading from the N-terminus, the 188-residue chain is uncharacterized protein (188 aa).

Residues 1–23 (MFKGQKTLAALAVSLLFTAPVYA) form the signal peptide. Cysteines 42 and 81 form a disulfide.

The protein belongs to the fimbrial protein family.

It is found in the fimbrium. This is an uncharacterized protein from Escherichia coli (strain K12).